Here is a 347-residue protein sequence, read N- to C-terminus: NADH-quinone oxidoreductase subunit H (347 aa).

9 helical membrane-spanning segments follow: residues isoleucine 13–valine 33, proline 50–phenylalanine 70, alanine 82–valine 102, valine 115–glycine 135, isoleucine 161–valine 181, phenylalanine 198–leucine 218, cysteine 263–leucine 283, valine 286–valine 306, and leucine 321–leucine 341.

The protein belongs to the complex I subunit 1 family. In terms of assembly, NDH-1 is composed of 14 different subunits. Subunits NuoA, H, J, K, L, M, N constitute the membrane sector of the complex.

It is found in the cell inner membrane. The catalysed reaction is a quinone + NADH + 5 H(+)(in) = a quinol + NAD(+) + 4 H(+)(out). NDH-1 shuttles electrons from NADH, via FMN and iron-sulfur (Fe-S) centers, to quinones in the respiratory chain. The immediate electron acceptor for the enzyme in this species is believed to be ubiquinone. Couples the redox reaction to proton translocation (for every two electrons transferred, four hydrogen ions are translocated across the cytoplasmic membrane), and thus conserves the redox energy in a proton gradient. This subunit may bind ubiquinone. The polypeptide is NADH-quinone oxidoreductase subunit H (Rhizobium leguminosarum bv. trifolii (strain WSM2304)).